A 265-amino-acid chain; its full sequence is Bidirectional sugar transporter SWEET7b (265 aa).

The Extracellular segment spans residues 1–9 (MVSPDLIRN). Residues 10–30 (MVGIVGNIISFGLFLSPVPTF) form a helical membrane-spanning segment. The region spanning 10–97 (MVGIVGNIIS…TIFFLFSDKK (88 aa)) is the MtN3/slv 1 domain. At 31–45 (YRIIKNKDVQDFKAD) the chain is on the cytoplasmic side. A helical membrane pass occupies residues 46 to 66 (PYLATLLNCMLWVFYGLPIVH). Over 67-69 (PNS) the chain is Extracellular. Residues 70–90 (ILVVTINGIGLVIEAVYLTIF) traverse the membrane as a helical segment. Over 91–101 (FLFSDKKNKKK) the chain is Cytoplasmic. Residues 102–122 (MGVVLATEALFMAAVVLGVLL) traverse the membrane as a helical segment. At 123–131 (GAHTHQRRS) the chain is on the extracellular side. A helical transmembrane segment spans residues 132–152 (LIVGILCVIFGTIMYSSPLTI). The MtN3/slv 2 domain maps to 133–215 (IVGILCVIFG…QLILYAIYYR (83 aa)). Residues 153-165 (MSQVVKTKSVEYM) lie on the Cytoplasmic side of the membrane. The chain crosses the membrane as a helical span at residues 166-186 (PLLLSVVSFLNGLCWTSYALI). Residues 187–189 (RLD) lie on the Extracellular side of the membrane. Residues 190-210 (IFITIPNGLGVLFALMQLILY) form a helical membrane-spanning segment. The Cytoplasmic portion of the chain corresponds to 211–265 (AIYYRTIPKKQDKNLELPTVAPVAKDTSIVTPVSKDDDVDGGNASHVTINITIEL).

It belongs to the SWEET sugar transporter family. In terms of assembly, forms homooligomers and/or heterooligomers.

It is found in the cell membrane. In terms of biological role, mediates both low-affinity uptake and efflux of sugar across the plasma membrane. The polypeptide is Bidirectional sugar transporter SWEET7b (SWEET7B) (Oryza sativa subsp. japonica (Rice)).